The chain runs to 505 residues: Lysine--tRNA ligase (505 aa).

Glu415 and Glu422 together coordinate Mg(2+).

This sequence belongs to the class-II aminoacyl-tRNA synthetase family. In terms of assembly, homodimer. Mg(2+) serves as cofactor.

It is found in the cytoplasm. The catalysed reaction is tRNA(Lys) + L-lysine + ATP = L-lysyl-tRNA(Lys) + AMP + diphosphate. The chain is Lysine--tRNA ligase from Pectobacterium carotovorum subsp. carotovorum (strain PC1).